The chain runs to 736 residues: Phosphoribosylformylglycinamidine synthase subunit PurL (736 aa).

H50 is a catalytic residue. ATP contacts are provided by Y53 and K92. E94 contributes to the Mg(2+) binding site. Residues 95-98 (SHNH) and R117 each bind substrate. H96 acts as the Proton acceptor in catalysis. D118 lines the Mg(2+) pocket. Q241 is a substrate binding site. D269 contacts Mg(2+). Residue 313–315 (ESQ) coordinates substrate. D495 and G532 together coordinate ATP. N533 serves as a coordination point for Mg(2+). S535 lines the substrate pocket.

It belongs to the FGAMS family. In terms of assembly, monomer. Part of the FGAM synthase complex composed of 1 PurL, 1 PurQ and 2 PurS subunits.

It is found in the cytoplasm. It catalyses the reaction N(2)-formyl-N(1)-(5-phospho-beta-D-ribosyl)glycinamide + L-glutamine + ATP + H2O = 2-formamido-N(1)-(5-O-phospho-beta-D-ribosyl)acetamidine + L-glutamate + ADP + phosphate + H(+). The protein operates within purine metabolism; IMP biosynthesis via de novo pathway; 5-amino-1-(5-phospho-D-ribosyl)imidazole from N(2)-formyl-N(1)-(5-phospho-D-ribosyl)glycinamide: step 1/2. Functionally, part of the phosphoribosylformylglycinamidine synthase complex involved in the purines biosynthetic pathway. Catalyzes the ATP-dependent conversion of formylglycinamide ribonucleotide (FGAR) and glutamine to yield formylglycinamidine ribonucleotide (FGAM) and glutamate. The FGAM synthase complex is composed of three subunits. PurQ produces an ammonia molecule by converting glutamine to glutamate. PurL transfers the ammonia molecule to FGAR to form FGAM in an ATP-dependent manner. PurS interacts with PurQ and PurL and is thought to assist in the transfer of the ammonia molecule from PurQ to PurL. The protein is Phosphoribosylformylglycinamidine synthase subunit PurL of Bartonella quintana (strain Toulouse) (Rochalimaea quintana).